A 517-amino-acid chain; its full sequence is Cytochrome P450 monooxygenase polD (517 aa).

Residues Val-5 to His-27 traverse the membrane as a helical segment. Cys-435 contacts heme.

It belongs to the cytochrome P450 family. Heme is required as a cofactor.

It is found in the membrane. Cytochrome P450 monooxygenase; part of the gene cluster that mediates the biosynthesis of antifungal fernane-type triterpenoid polytolypin. PolD doe not seem to be involved in the biosynthesis of polytolypin. Within the pathway, the triterpene cyclase polA first catalyzes the cyclization of 2,3-oxidosqualene to motiol, polc converts the 4-alpha-methyl group of motiol to a carboxyl group, polB is responsible for appending a hydroxyl group at the 2-alpha position and polE is a dual functional P450, which can catalyze the formation of both the 1-beta-hydroxyl group and 10-beta-carboxyl group. The chain is Cytochrome P450 monooxygenase polD from Polytolypa hystricis (strain UAMH7299).